A 611-amino-acid polypeptide reads, in one-letter code: Dihydroxy-acid dehydratase (611 aa).

Residue D81 coordinates Mg(2+). A [2Fe-2S] cluster-binding site is contributed by C122. Mg(2+) contacts are provided by D123 and K124. An N6-carboxylysine modification is found at K124. C195 contributes to the [2Fe-2S] cluster binding site. E491 contributes to the Mg(2+) binding site. S517 (proton acceptor) is an active-site residue.

Belongs to the IlvD/Edd family. Homodimer. [2Fe-2S] cluster serves as cofactor. Mg(2+) is required as a cofactor.

The enzyme catalyses (2R)-2,3-dihydroxy-3-methylbutanoate = 3-methyl-2-oxobutanoate + H2O. The catalysed reaction is (2R,3R)-2,3-dihydroxy-3-methylpentanoate = (S)-3-methyl-2-oxopentanoate + H2O. It participates in amino-acid biosynthesis; L-isoleucine biosynthesis; L-isoleucine from 2-oxobutanoate: step 3/4. It functions in the pathway amino-acid biosynthesis; L-valine biosynthesis; L-valine from pyruvate: step 3/4. Its function is as follows. Functions in the biosynthesis of branched-chain amino acids. Catalyzes the dehydration of (2R,3R)-2,3-dihydroxy-3-methylpentanoate (2,3-dihydroxy-3-methylvalerate) into 2-oxo-3-methylpentanoate (2-oxo-3-methylvalerate) and of (2R)-2,3-dihydroxy-3-methylbutanoate (2,3-dihydroxyisovalerate) into 2-oxo-3-methylbutanoate (2-oxoisovalerate), the penultimate precursor to L-isoleucine and L-valine, respectively. This Allorhizobium ampelinum (strain ATCC BAA-846 / DSM 112012 / S4) (Agrobacterium vitis (strain S4)) protein is Dihydroxy-acid dehydratase.